A 1710-amino-acid chain; its full sequence is Chromodomain-helicase-DNA-binding protein 1 (1710 aa).

The segment covering 1–10 (MNGHSDEESV) has biased composition (basic and acidic residues). The interval 1–252 (MNGHSDEESV…KEDEEMKTDS (252 aa)) is disordered. Residues 35 to 63 (SSGSSSDGSSSQSGSSDSDSGSESGSQSE) are compositionally biased toward low complexity. The segment covering 67–85 (DTSRENKVQAKPPKVDGAE) has biased composition (basic and acidic residues). The segment covering 105–121 (QQQQQQQQQHQASSNSG) has biased composition (low complexity). Positions 122–136 (SEEDSSSSEDSDDSS) are enriched in acidic residues. Residues 152–163 (SGSGSPSQSGSD) are compositionally biased toward low complexity. Residues 187 to 210 (KVKSRKPQNRSKSKNGKKILGQKK) show a composition bias toward basic residues. Phosphoserine occurs at positions 215 and 216. Positions 215–226 (SSEEDDDEEDYD) are enriched in acidic residues. Phosphothreonine is present on Thr-237. At Ser-241 the chain carries Phosphoserine. Position 250 is a phosphothreonine (Thr-250). Position 252 is a phosphoserine (Ser-252). Chromo domains follow at residues 272–364 (ETIE…RWLK) and 389–452 (QIVE…TPFK). Ser-471 is subject to Phosphoserine. Residues 493 to 663 (AHSWCKGNSC…WSLLHFIMPE (171 aa)) form the Helicase ATP-binding domain. Position 506 to 513 (506 to 513 (DEMGLGKT)) interacts with ATP. Positions 614-617 (DEAH) match the DEAH box motif. The region spanning 792 to 943 (LLDKLLIRLR…HLVIQRMDTT (152 aa)) is the Helicase C-terminal domain. Phosphoserine is present on residues Ser-1025, Ser-1040, Ser-1081, Ser-1085, Ser-1096, Ser-1098, Ser-1100, and Ser-1102. The disordered stretch occupies residues 1080–1120 (ISFNGSEGRRSRSRRYSGSDSDSISEGKRPKKRGRPRTIPR). Residues 1108 to 1117 (RPKKRGRPRT) show a composition bias toward basic residues. Ser-1161 carries the phosphoserine modification. 2 disordered regions span residues 1321 to 1408 (EALS…ESEE) and 1502 to 1710 (KKRQ…SRKT). Basic residues predominate over residues 1329–1345 (SKRRKARAKKNKAMKSI). Residues Ser-1353, Ser-1355, Ser-1356, Ser-1360, Ser-1363, Ser-1371, and Ser-1373 each carry the phosphoserine modification. Positions 1370–1379 (LSESKSDGRE) are enriched in basic and acidic residues. The interval 1409 to 1511 (LDQKTFSICK…KKRQESQQNS (103 aa)) is CHD1 helical C-terminal domain (CHCT). The span at 1507 to 1516 (SQQNSDQNSN) shows a compositional bias: low complexity. Basic and acidic residues-rich tracts occupy residues 1523-1573 (RNPD…DSRK) and 1582-1670 (GKDH…DHRA). Ser-1622 is subject to Phosphoserine. Repeat copies occupy residues 1628 to 1632 (HSDHR), 1634 to 1638 (HSDHR), and 1640 to 1644 (HSDHR). Residues 1628–1644 (HSDHRSHSDHRLHSDHR) are 3 X 5 AA repeats of H-S-D-H-R. A phosphoserine mark is found at Ser-1677, Arg-1688, and Ser-1689. Over residues 1690 to 1701 (PFEHSVEHKSTP) the composition is skewed to basic and acidic residues.

It belongs to the SNF2/RAD54 helicase family. In terms of assembly, component of the SAGA complex. Interacts with BCLAF1, NCoR, SRP20 and SAFB. Specifically interacts with methylated H3K4me2 and H3K4me3. Interacts with the FACT complex, the PAF complex and the U2 snRNP. Interacts directly with PAF1, SFA3A1, SFA3A2, SFA3A3, SNF2 and SSRP1. As to expression, expressed in many tissues including in the brain, where the highest level of expression is found in the cerebellum and basal ganglia.

The protein resides in the nucleus. It localises to the cytoplasm. It catalyses the reaction ATP + H2O = ADP + phosphate + H(+). In terms of biological role, ATP-dependent chromatin-remodeling factor which functions as substrate recognition component of the transcription regulatory histone acetylation (HAT) complex SAGA. Regulates polymerase II transcription. Also required for efficient transcription by RNA polymerase I, and more specifically the polymerase I transcription termination step. Regulates negatively DNA replication. Not only involved in transcription-related chromatin-remodeling, but also required to maintain a specific chromatin configuration across the genome. Is also associated with histone deacetylase (HDAC) activity. Required for the bridging of SNF2, the FACT complex, the PAF complex as well as the U2 snRNP complex to H3K4me3. Functions to modulate the efficiency of pre-mRNA splicing in part through physical bridging of spliceosomal components to H3K4me3. Required for maintaining open chromatin and pluripotency in embryonic stem cells. The polypeptide is Chromodomain-helicase-DNA-binding protein 1 (Homo sapiens (Human)).